Reading from the N-terminus, the 258-residue chain is MAKKFDKDSFSGTLIVVLAVSLICSVIVAGAVVGLKPIQEKQKLQDKQGYILSVAGLMDKDTDIGKTFAERIEQRVVDLATGEYVKDAPKDFSARIAGKDPAQSIRIKPEDDLAGIKSRAKYTEVYLVKGEDGKIGQIILPMHGNGLWSVMYGFVAIQPDGNTINGITYYEQGETPGLGGEIGNPLWQQKFVGKKLFDGQGKLALHVGKGAGSDKEHGVDALSGASLTSKGVQGSFAYWFGENGYIPYLNKLKSAGAQ.

A helical membrane pass occupies residues 14–34 (LIVVLAVSLICSVIVAGAVVG). An FMN phosphoryl serine modification is found at S226.

This sequence belongs to the NqrC family. Composed of six subunits; NqrA, NqrB, NqrC, NqrD, NqrE and NqrF. FMN is required as a cofactor.

It is found in the cell inner membrane. It catalyses the reaction a ubiquinone + n Na(+)(in) + NADH + H(+) = a ubiquinol + n Na(+)(out) + NAD(+). NQR complex catalyzes the reduction of ubiquinone-1 to ubiquinol by two successive reactions, coupled with the transport of Na(+) ions from the cytoplasm to the periplasm. NqrA to NqrE are probably involved in the second step, the conversion of ubisemiquinone to ubiquinol. This chain is Na(+)-translocating NADH-quinone reductase subunit C, found in Neisseria meningitidis serogroup A / serotype 4A (strain DSM 15465 / Z2491).